A 147-amino-acid chain; its full sequence is UPF0047 protein sll1880 (147 aa).

It belongs to the UPF0047 family.

This is UPF0047 protein sll1880 from Synechocystis sp. (strain ATCC 27184 / PCC 6803 / Kazusa).